A 319-amino-acid polypeptide reads, in one-letter code: ATP-dependent 6-phosphofructokinase (319 aa).

Gly11 is an ATP binding site. 21 to 25 (RAVVR) is a binding site for ADP. ATP-binding positions include 72-73 (RC) and 102-105 (GDGS). Asp103 serves as a coordination point for Mg(2+). 125 to 127 (TID) serves as a coordination point for substrate. Asp127 acts as the Proton acceptor in catalysis. Arg154 provides a ligand contact to ADP. Substrate-binding positions include Arg162 and 169–171 (MGR). ADP is bound by residues 185–187 (GAE), Arg211, and 213–215 (KKH). Substrate-binding positions include Glu222, Arg243, and 249–252 (HVQR).

The protein belongs to the phosphofructokinase type A (PFKA) family. ATP-dependent PFK group I subfamily. Prokaryotic clade 'B1' sub-subfamily. Homotetramer. The cofactor is Mg(2+).

Its subcellular location is the cytoplasm. The enzyme catalyses beta-D-fructose 6-phosphate + ATP = beta-D-fructose 1,6-bisphosphate + ADP + H(+). The protein operates within carbohydrate degradation; glycolysis; D-glyceraldehyde 3-phosphate and glycerone phosphate from D-glucose: step 3/4. Its activity is regulated as follows. Allosterically activated by ADP and other diphosphonucleosides, and allosterically inhibited by phosphoenolpyruvate. Catalyzes the phosphorylation of D-fructose 6-phosphate to fructose 1,6-bisphosphate by ATP, the first committing step of glycolysis. This Bacillus cereus (strain B4264) protein is ATP-dependent 6-phosphofructokinase.